The chain runs to 349 residues: tRNA pseudouridine synthase D (349 aa).

F27 contacts substrate. The active-site Nucleophile is D80. N129 serves as a coordination point for substrate. A TRUD domain is found at 155–303 (GVPNYFGAQR…VEAARRAMLL (149 aa)). F329 lines the substrate pocket.

It belongs to the pseudouridine synthase TruD family.

It catalyses the reaction uridine(13) in tRNA = pseudouridine(13) in tRNA. Functionally, responsible for synthesis of pseudouridine from uracil-13 in transfer RNAs. This Klebsiella pneumoniae subsp. pneumoniae (strain ATCC 700721 / MGH 78578) protein is tRNA pseudouridine synthase D.